The following is a 271-amino-acid chain: Sec-independent protein translocase protein TatC (271 aa).

Helical transmembrane passes span 35–55 (IIWTFVYIAAGFGVCWWWHEQ), 93–113 (AFIAGLFVASPFVLYQVWLFI), 124–144 (YVLPFMFSTVLLFLGGGVFGY), 178–198 (IILGLGIVFEMPILVFFLALM), 213–233 (SILVIFVIAAIITPTTDIMNM), and 234–254 (CVFAAPMILLYILSIGVAFLV).

Belongs to the TatC family. In terms of assembly, forms a complex with TatA.

The protein localises to the cell inner membrane. In terms of biological role, part of the twin-arginine translocation (Tat) system that transports large folded proteins containing a characteristic twin-arginine motif in their signal peptide across membranes. The polypeptide is Sec-independent protein translocase protein TatC (Koribacter versatilis (strain Ellin345)).